The sequence spans 277 residues: Urease accessory protein UreD (277 aa).

The disordered stretch occupies residues 1-20; it reads MRQTAQEDASPAPMQRAHGT.

Belongs to the UreD family. UreD, UreF and UreG form a complex that acts as a GTP-hydrolysis-dependent molecular chaperone, activating the urease apoprotein by helping to assemble the nickel containing metallocenter of UreC. The UreE protein probably delivers the nickel.

It is found in the cytoplasm. Functionally, required for maturation of urease via the functional incorporation of the urease nickel metallocenter. This is Urease accessory protein UreD from Chelativorans sp. (strain BNC1).